The primary structure comprises 73 residues: Pelophylaxin-1 (73 aa).

The first 22 residues, 1–22 (MFTMKKSLLLVFFLGTIALSLC), serve as a signal peptide directing secretion. Positions 23–41 (EEERGADDDNGGEITDEEI) are excised as a propeptide. Residues C67 and C73 are joined by a disulfide bond.

In terms of tissue distribution, expressed by the skin glands.

The protein localises to the secreted. In terms of biological role, antimicrobial peptide. The protein is Pelophylaxin-1 of Pelophylax fukienensis (Fukien gold-striped pond frog).